Consider the following 179-residue polypeptide: Calcineurin subunit B type 2 (179 aa).

Residue Gly-2 is the site of N-myristoyl glycine attachment. 4 EF-hand domains span residues 18-53 (EEIR…QQNP), 57-85 (RVID…FSVK), 87-122 (DEEQ…MVGN), and 128-163 (QLQQ…MEIH). Ca(2+)-binding residues include Asp-31, Asp-33, Ser-35, Ser-37, Glu-42, Asp-63, Asp-65, Asn-67, Glu-69, Glu-74, Asp-100, Asp-102, Asp-104, and Glu-111. The calcineurin A binding stretch occupies residues 131-136 (QLVDKS). The Ca(2+) site is built by Asp-141, Asp-143, Asp-145, Arg-147, and Glu-152.

Belongs to the calcineurin regulatory subunit family. As to quaternary structure, forms a complex composed of a calmodulin-dependent catalytic subunit (also known as calcineurin A) and a regulatory Ca(2+)-binding subunit (also known as calcineurin B). There are three catalytic subunits, each encoded by a separate gene (PPP3CA, PPP3CB, and PPP3CC) and two regulatory subunits which are also encoded by separate genes (PPP3R1 and PPP3R2). Interacts with SPATA33 (via PQIIIT motif). As to expression, expressed in osteoblasts and bone marrow (at protein level). Expressed in the testis. Expressed in the sperm midpiece in a SPATA33-dependent manner (at protein level).

The protein resides in the mitochondrion. Functionally, regulatory subunit of calcineurin, a calcium-dependent, calmodulin stimulated protein phosphatase. Confers calcium sensitivity. In Mus musculus (Mouse), this protein is Calcineurin subunit B type 2 (Ppp3r2).